A 156-amino-acid polypeptide reads, in one-letter code: S-ribosylhomocysteine lyase (156 aa).

Fe cation is bound by residues His-56, His-60, and Cys-123.

Belongs to the LuxS family. As to quaternary structure, homodimer. Requires Fe cation as cofactor.

The enzyme catalyses S-(5-deoxy-D-ribos-5-yl)-L-homocysteine = (S)-4,5-dihydroxypentane-2,3-dione + L-homocysteine. Functionally, involved in the synthesis of autoinducer 2 (AI-2) which is secreted by bacteria and is used to communicate both the cell density and the metabolic potential of the environment. The regulation of gene expression in response to changes in cell density is called quorum sensing. Catalyzes the transformation of S-ribosylhomocysteine (RHC) to homocysteine (HC) and 4,5-dihydroxy-2,3-pentadione (DPD). This is S-ribosylhomocysteine lyase from Staphylococcus saprophyticus subsp. saprophyticus (strain ATCC 15305 / DSM 20229 / NCIMB 8711 / NCTC 7292 / S-41).